Consider the following 946-residue polypeptide: Protein dct-6 (946 aa).

Residues 326–363 (YMDMNDQIEQMIALLVDQLEELEKLEQLCDEVQKTGNQ) adopt a coiled-coil conformation.

May have a role in tumor suppression. The sequence is that of Protein dct-6 from Caenorhabditis briggsae.